The following is a 155-amino-acid chain: SsrA-binding protein (155 aa).

The disordered stretch occupies residues R136–Y155.

The protein belongs to the SmpB family.

It localises to the cytoplasm. In terms of biological role, required for rescue of stalled ribosomes mediated by trans-translation. Binds to transfer-messenger RNA (tmRNA), required for stable association of tmRNA with ribosomes. tmRNA and SmpB together mimic tRNA shape, replacing the anticodon stem-loop with SmpB. tmRNA is encoded by the ssrA gene; the 2 termini fold to resemble tRNA(Ala) and it encodes a 'tag peptide', a short internal open reading frame. During trans-translation Ala-aminoacylated tmRNA acts like a tRNA, entering the A-site of stalled ribosomes, displacing the stalled mRNA. The ribosome then switches to translate the ORF on the tmRNA; the nascent peptide is terminated with the 'tag peptide' encoded by the tmRNA and targeted for degradation. The ribosome is freed to recommence translation, which seems to be the essential function of trans-translation. This Nostoc punctiforme (strain ATCC 29133 / PCC 73102) protein is SsrA-binding protein.